A 227-amino-acid chain; its full sequence is tRNA pseudouridine synthase B (227 aa).

Catalysis depends on Asp-42, which acts as the Nucleophile.

It belongs to the pseudouridine synthase TruB family. Type 1 subfamily.

The catalysed reaction is uridine(55) in tRNA = pseudouridine(55) in tRNA. Responsible for synthesis of pseudouridine from uracil-55 in the psi GC loop of transfer RNAs. The protein is tRNA pseudouridine synthase B of Ureaplasma parvum serovar 3 (strain ATCC 27815 / 27 / NCTC 11736).